The following is a 420-amino-acid chain: Glucose-1-phosphate adenylyltransferase (420 aa).

Alpha-D-glucose 1-phosphate contacts are provided by residues tyrosine 107, glycine 173, 188-189 (EK), and serine 206.

It belongs to the bacterial/plant glucose-1-phosphate adenylyltransferase family. Homotetramer.

It carries out the reaction alpha-D-glucose 1-phosphate + ATP + H(+) = ADP-alpha-D-glucose + diphosphate. It functions in the pathway glycan biosynthesis; glycogen biosynthesis. Involved in the biosynthesis of ADP-glucose, a building block required for the elongation reactions to produce glycogen. Catalyzes the reaction between ATP and alpha-D-glucose 1-phosphate (G1P) to produce pyrophosphate and ADP-Glc. This chain is Glucose-1-phosphate adenylyltransferase, found in Shewanella sp. (strain W3-18-1).